Here is a 367-residue protein sequence, read N- to C-terminus: Inner membrane amino-acid ABC transporter permease protein YhdY (367 aa).

Topologically, residues 1-36 (MTKVLLSHPPRPASHNSSRAMVWVRKNLFSSWSNSL) are cytoplasmic. The chain crosses the membrane as a helical span at residues 37–57 (LTIGCIWLMWELIPPLLNWAF). At 58–99 (LQANWVGSTRADCTKAGACWVFIHERFGQFMYGLYPHDQRWR) the chain is on the periplasmic side. A helical membrane pass occupies residues 100–120 (INLALLIGLVSIAPMFWKILP). Over 121 to 125 (HRGRY) the chain is Cytoplasmic. A helical membrane pass occupies residues 126–146 (IAAWAVIYPLIVWWLMYGGFF). Topologically, residues 147-162 (ALERVETRQWGGLTLT) are periplasmic. The ABC transmembrane type-1 domain maps to 159–353 (LTLTLIIASV…IFCFSMSRYS (195 aa)). A helical transmembrane segment spans residues 163–183 (LIIASVGIAGALPWGILLALG). Topologically, residues 184-192 (RRSHMPIVR) are cytoplasmic. A helical transmembrane segment spans residues 193-213 (ILSVIFIEFWRGVPLITVLFM). Residues 214–233 (SSVMLPLFMAEGTSIDKLIR) are Periplasmic-facing. A helical transmembrane segment spans residues 234-254 (ALVGVILFQSAYVAEVVRGGL). Residues 255-291 (QALPKGQYEAAESLALGYWKTQGLVILPQALKLVIPG) are Cytoplasmic-facing. Residues 292–312 (LVNTIIALFKDTSLVIIIGLF) form a helical membrane-spanning segment. Over 313–326 (DLFSSVQQATVDPA) the chain is Periplasmic. Residues 327-347 (WLGMSTEGYVFAALIYWIFCF) form a helical membrane-spanning segment. Topologically, residues 348–367 (SMSRYSQYLEKRFNTGRTPH) are cytoplasmic.

The protein belongs to the binding-protein-dependent transport system permease family. HisMQ subfamily.

It localises to the cell inner membrane. In terms of biological role, probably part of the binding-protein-dependent transport system YdhWXYZ for an amino acid; probably responsible for the translocation of the substrate across the membrane. The protein is Inner membrane amino-acid ABC transporter permease protein YhdY (yhdY) of Escherichia coli (strain K12).